Reading from the N-terminus, the 496-residue chain is Sugar transporter ERD6 (496 aa).

6 helical membrane-spanning segments follow: residues Val-58–Phe-78, Val-94–Phe-114, Met-128–Ala-148, Leu-156–Ile-176, Gly-183–Ile-203, and Leu-211–Pro-231. Ser-256 is modified (phosphoserine). A run of 6 helical transmembrane segments spans residues Tyr-292–Val-312, Ile-329–Val-349, Ala-364–Leu-384, Ile-394–Ile-414, Leu-430–Leu-450, and Gly-456–Val-476.

It belongs to the major facilitator superfamily. Sugar transporter (TC 2.A.1.1) family. Expressed in both shoots and roots. In roots, expressed in epidermal cells and especially strongly in cortex cells. In flowers, expressed in sepals.

The protein localises to the membrane. Functionally, sugar transporter. The protein is Sugar transporter ERD6 (ERD6) of Arabidopsis thaliana (Mouse-ear cress).